The sequence spans 488 residues: 3-octaprenyl-4-hydroxybenzoate carboxy-lyase (488 aa).

Position 172 (N172) interacts with Mn(2+). Prenylated FMN is bound by residues I175 to R177, R189 to L191, and R194 to G195. Position 238 (E238) interacts with Mn(2+). The active-site Proton donor is the D287.

This sequence belongs to the UbiD family. In terms of assembly, homohexamer. It depends on prenylated FMN as a cofactor. Mn(2+) is required as a cofactor.

The protein localises to the cell membrane. It carries out the reaction a 4-hydroxy-3-(all-trans-polyprenyl)benzoate + H(+) = a 2-(all-trans-polyprenyl)phenol + CO2. The protein operates within cofactor biosynthesis; ubiquinone biosynthesis. Functionally, catalyzes the decarboxylation of 3-octaprenyl-4-hydroxy benzoate to 2-octaprenylphenol, an intermediate step in ubiquinone biosynthesis. This Legionella pneumophila (strain Lens) protein is 3-octaprenyl-4-hydroxybenzoate carboxy-lyase.